Consider the following 158-residue polypeptide: NAD(P)H-quinone oxidoreductase subunit J, chloroplastic (158 aa).

The protein belongs to the complex I 30 kDa subunit family. NDH is composed of at least 16 different subunits, 5 of which are encoded in the nucleus.

Its subcellular location is the plastid. The protein localises to the chloroplast thylakoid membrane. It carries out the reaction a plastoquinone + NADH + (n+1) H(+)(in) = a plastoquinol + NAD(+) + n H(+)(out). The catalysed reaction is a plastoquinone + NADPH + (n+1) H(+)(in) = a plastoquinol + NADP(+) + n H(+)(out). Functionally, NDH shuttles electrons from NAD(P)H:plastoquinone, via FMN and iron-sulfur (Fe-S) centers, to quinones in the photosynthetic chain and possibly in a chloroplast respiratory chain. The immediate electron acceptor for the enzyme in this species is believed to be plastoquinone. Couples the redox reaction to proton translocation, and thus conserves the redox energy in a proton gradient. The polypeptide is NAD(P)H-quinone oxidoreductase subunit J, chloroplastic (Arabis hirsuta (Hairy rock-cress)).